The primary structure comprises 580 residues: Arginine--tRNA ligase (580 aa).

The 'HIGH' region signature appears at 137 to 147 (ANPTGPLHIGH).

The protein belongs to the class-I aminoacyl-tRNA synthetase family. Monomer.

The protein resides in the cytoplasm. It carries out the reaction tRNA(Arg) + L-arginine + ATP = L-arginyl-tRNA(Arg) + AMP + diphosphate. The protein is Arginine--tRNA ligase of Anaplasma phagocytophilum (strain HZ).